The sequence spans 112 residues: MKKIDAIIKPFKLDDVREALAEVGITGMTVTEVKGFGRQKGHTELYRGAEYMVDFLPKVKIEIVVTDDIVDTCVDTIIRTAQTGKIGDGKIFVFDVARVIRIRTGEEDDAAI.

Tyrosine 51 is subject to O-UMP-tyrosine.

This sequence belongs to the P(II) protein family. In terms of assembly, homotrimer.

Its function is as follows. In nitrogen-limiting conditions, when the ratio of Gln to 2-ketoglutarate decreases, P-II is uridylylated to P-II-UMP. P-II-UMP allows the deadenylation of glutamine synthetase (GS), thus activating the enzyme. Conversely, in nitrogen excess P-II is deuridylated and promotes the adenylation of GS. P-II indirectly controls the transcription of the GS gene (glnA). P-II prevents NR-II-catalyzed conversion of NR-I to NR-I-phosphate, the transcriptional activator of glnA. When P-II is uridylylated to P-II-UMP, these events are reversed. The chain is Nitrogen regulatory protein P-II (glnB) from Klebsiella oxytoca.